The following is a 660-amino-acid chain: Crossover junction endonuclease MUS81 (660 aa).

The Helix-hairpin-helix motif 1 signature appears at 62 to 81; sequence KDLYQIKGVGKWVIRQLKGS. Residues 82-98 are compositionally biased toward low complexity; that stretch reads FPESSPDLSPPESNAAG. Residues 82-109 form a disordered region; sequence FPESSPDLSPPESNAAGEKGKKAGGSKR. The region spanning 411–506 is the ERCC4 domain; that stretch reads LILDDRENFG…RKLIYLVEGD (96 aa). The short motif at 586–623 is the Helix-hairpin-helix motif 2 element; it reads TVSDVFALQLMQVPQVTEEAALAVIGLYPTLFSLAKAY.

It belongs to the XPF family. Forms a heterodimer with EME1. Interacts with RAD54. Mg(2+) serves as cofactor. Requires Ca(2+) as cofactor. Low expression in shoots and roots from etiolated seedlings, and panicles after meiosis; moderate expression in young panicles under differentiation of floral organs before and during meiosis; and high expression in mature leaves.

The protein resides in the nucleus. Functionally, interacts with EME1 to form a DNA structure-specific endonuclease with substrate preference for branched DNA structures with a 5'-end at the branch nick. Typical substrates include 3'-flap structures, D-loops, replication forks, nicked Holliday junctions and also intact Holliday junctions with a reduced efficiency. May be required in mitosis for the processing of stalled or collapsed replication fork intermediates. Plays a role in DNA repair and in genotoxic stress-induced homologous recombination (HR) in somatic cells. Mediates a subset of meiotic recombination events that are insensitive to crossover interference. The polypeptide is Crossover junction endonuclease MUS81 (MUS81) (Oryza sativa subsp. japonica (Rice)).